We begin with the raw amino-acid sequence, 530 residues long: Bifunctional purine biosynthesis protein PurH (530 aa).

The MGS-like domain maps to 1–148 (MNNPRPIRRA…KNHKDVTIVV (148 aa)).

It belongs to the PurH family.

The catalysed reaction is (6R)-10-formyltetrahydrofolate + 5-amino-1-(5-phospho-beta-D-ribosyl)imidazole-4-carboxamide = 5-formamido-1-(5-phospho-D-ribosyl)imidazole-4-carboxamide + (6S)-5,6,7,8-tetrahydrofolate. It catalyses the reaction IMP + H2O = 5-formamido-1-(5-phospho-D-ribosyl)imidazole-4-carboxamide. Its pathway is purine metabolism; IMP biosynthesis via de novo pathway; 5-formamido-1-(5-phospho-D-ribosyl)imidazole-4-carboxamide from 5-amino-1-(5-phospho-D-ribosyl)imidazole-4-carboxamide (10-formyl THF route): step 1/1. It functions in the pathway purine metabolism; IMP biosynthesis via de novo pathway; IMP from 5-formamido-1-(5-phospho-D-ribosyl)imidazole-4-carboxamide: step 1/1. This is Bifunctional purine biosynthesis protein PurH from Aliivibrio salmonicida (strain LFI1238) (Vibrio salmonicida (strain LFI1238)).